The chain runs to 212 residues: Regulatory protein RecX (212 aa).

Belongs to the RecX family.

It is found in the cytoplasm. Its function is as follows. Modulates RecA activity. The sequence is that of Regulatory protein RecX from Clostridium perfringens (strain SM101 / Type A).